Consider the following 95-residue polypeptide: Protein TusB (95 aa).

This sequence belongs to the DsrH/TusB family. In terms of assembly, heterohexamer, formed by a dimer of trimers. The hexameric TusBCD complex contains 2 copies each of TusB, TusC and TusD. The TusBCD complex interacts with TusE.

It localises to the cytoplasm. Functionally, part of a sulfur-relay system required for 2-thiolation of 5-methylaminomethyl-2-thiouridine (mnm(5)s(2)U) at tRNA wobble positions. This Escherichia fergusonii (strain ATCC 35469 / DSM 13698 / CCUG 18766 / IAM 14443 / JCM 21226 / LMG 7866 / NBRC 102419 / NCTC 12128 / CDC 0568-73) protein is Protein TusB.